Reading from the N-terminus, the 613-residue chain is Protein translocase subunit SecD (613 aa).

The next 6 helical transmembrane spans lie at 10 to 30 (ALVVAVAILSIYQLVPSWFYF), 452 to 472 (KGTLAALVGLALVVVFMVVYY), 477 to 497 (LVADVALALNGLLVLAVMSMI), 503 to 523 (LPGIAGFVLTLGMAVDANVLI), 548 to 568 (VFWTIVDSHVTTLVAGVVLFQ), and 576 to 596 (GFAVTLIIGLVASMFTSIVVT).

This sequence belongs to the SecD/SecF family. SecD subfamily. Forms a complex with SecF. Part of the essential Sec protein translocation apparatus which comprises SecA, SecYEG and auxiliary proteins SecDF-YajC and YidC.

It is found in the cell inner membrane. Part of the Sec protein translocase complex. Interacts with the SecYEG preprotein conducting channel. SecDF uses the proton motive force (PMF) to complete protein translocation after the ATP-dependent function of SecA. This chain is Protein translocase subunit SecD, found in Anaeromyxobacter dehalogenans (strain 2CP-C).